Here is a 175-residue protein sequence, read N- to C-terminus: Shikimate kinase (175 aa).

Residue 14-19 (GAGKST) coordinates ATP. Mg(2+) is bound at residue S18. 3 residues coordinate substrate: D36, R60, and G82. Residue R120 coordinates ATP. A substrate-binding site is contributed by R140. Q157 contacts ATP.

The protein belongs to the shikimate kinase family. In terms of assembly, monomer. Mg(2+) is required as a cofactor.

The protein resides in the cytoplasm. The enzyme catalyses shikimate + ATP = 3-phosphoshikimate + ADP + H(+). Its pathway is metabolic intermediate biosynthesis; chorismate biosynthesis; chorismate from D-erythrose 4-phosphate and phosphoenolpyruvate: step 5/7. Catalyzes the specific phosphorylation of the 3-hydroxyl group of shikimic acid using ATP as a cosubstrate. This is Shikimate kinase from Pasteurella multocida (strain Pm70).